Reading from the N-terminus, the 243-residue chain is Epoxyqueuosine reductase QueH (243 aa).

The span at 1–16 (MHRTKLEQKQPHFDAQ) shows a compositional bias: basic and acidic residues. Residues 1–30 (MHRTKLEQKQPHFDAQKRRKKECKNSNTPF) form a disordered region. Positions 49, 50, 128, and 131 each coordinate [4Fe-4S] cluster. Cys211 and Cys213 are oxidised to a cystine.

It belongs to the QueH family.

The enzyme catalyses epoxyqueuosine(34) in tRNA + AH2 = queuosine(34) in tRNA + A + H2O. It functions in the pathway tRNA modification; tRNA-queuosine biosynthesis. Its function is as follows. Catalyzes the conversion of epoxyqueuosine (oQ) to queuosine (Q), which is a hypermodified base found in the wobble positions of tRNA(Asp), tRNA(Asn), tRNA(His) and tRNA(Tyr). The protein is Epoxyqueuosine reductase QueH of Histophilus somni (strain 129Pt) (Haemophilus somnus).